The chain runs to 510 residues: Proline--tRNA ligase (510 aa).

The protein belongs to the class-II aminoacyl-tRNA synthetase family. ProS type 3 subfamily. In terms of assembly, homodimer.

The protein resides in the cytoplasm. It catalyses the reaction tRNA(Pro) + L-proline + ATP = L-prolyl-tRNA(Pro) + AMP + diphosphate. Functionally, catalyzes the attachment of proline to tRNA(Pro) in a two-step reaction: proline is first activated by ATP to form Pro-AMP and then transferred to the acceptor end of tRNA(Pro). In Sphingomonas elodea, this protein is Proline--tRNA ligase.